A 102-amino-acid chain; its full sequence is Monothiol glutaredoxin-S1 (102 aa).

A Glutaredoxin domain is found at 1 to 101 (MEKISNLLED…SLLRRAGAIW (101 aa)). C21 lines the [2Fe-2S] cluster pocket.

It belongs to the glutaredoxin family. CC-type subfamily.

The protein resides in the cytoplasm. Functionally, may only reduce GSH-thiol disulfides, but not protein disulfides. The polypeptide is Monothiol glutaredoxin-S1 (GRXS1) (Arabidopsis thaliana (Mouse-ear cress)).